The following is a 91-amino-acid chain: Insertion element IS1 1 protein InsA (91 aa).

Belongs to the IS1 elements InsA family.

Its function is as follows. Absolutely required for transposition of IS1. The chain is Insertion element IS1 1 protein InsA (insA1) from Escherichia coli (strain K12).